The following is a 291-amino-acid chain: Glycine--tRNA ligase alpha subunit (291 aa).

Belongs to the class-II aminoacyl-tRNA synthetase family. Tetramer of two alpha and two beta subunits.

The protein resides in the cytoplasm. The enzyme catalyses tRNA(Gly) + glycine + ATP = glycyl-tRNA(Gly) + AMP + diphosphate. The chain is Glycine--tRNA ligase alpha subunit from Geotalea uraniireducens (strain Rf4) (Geobacter uraniireducens).